The primary structure comprises 445 residues: F-box protein At5g10340 (445 aa).

Residues Ser-64–Ile-112 form the F-box domain.

In Arabidopsis thaliana (Mouse-ear cress), this protein is F-box protein At5g10340.